Here is a 364-residue protein sequence, read N- to C-terminus: MKKAILMMTFGSPEEITFEGVADFFTNIRRGVRPQDHEIQTLYDNYVRIGGTPLQKITRQEVALVEARLGNEYSVYFANKFSSPFIPDVIGQMEADGIEQCICLILEPHYSFYSVMGYEKFLESKQIQFLVIKDWYQEEALLNYWVDEIAKILKEEVKQDSCKVIFSAHSVPIFALDFGDPYIDQIFENSKLVAEKLGLSSEQYTNTWQSESDIGIPWIKPDVLEYLREQTEHPDHYIFVPISFISEHIEVLFDNDVECYDLCQEFGVNYHRPPMPNTDSRLIDALVNTVRVNENQEFKEFLPEEETFDELVPSDETKNILAESEDLQMPEFVKKLIEKKGRENVKMPYLIKKMFEKAGKLPKE.

Fe-coproporphyrin III-binding residues include Arg29 and Tyr118. Fe(2+)-binding residues include His169 and Glu250.

It belongs to the ferrochelatase family.

The protein localises to the cytoplasm. The catalysed reaction is Fe-coproporphyrin III + 2 H(+) = coproporphyrin III + Fe(2+). It participates in porphyrin-containing compound metabolism; protoheme biosynthesis. Its function is as follows. Involved in coproporphyrin-dependent heme b biosynthesis. Catalyzes the insertion of ferrous iron into coproporphyrin III to form Fe-coproporphyrin III. This Streptococcus pneumoniae (strain Hungary19A-6) protein is Coproporphyrin III ferrochelatase.